The chain runs to 422 residues: Histidine--tRNA ligase (422 aa).

It belongs to the class-II aminoacyl-tRNA synthetase family. Homodimer.

The protein resides in the cytoplasm. It catalyses the reaction tRNA(His) + L-histidine + ATP = L-histidyl-tRNA(His) + AMP + diphosphate + H(+). The chain is Histidine--tRNA ligase from Onion yellows phytoplasma (strain OY-M).